The following is a 269-amino-acid chain: Putative 12-oxophytodienoate reductase-like protein 2A (269 aa).

FMN contacts are provided by residues 28 to 30 (PLT) and Gln-103. 175–178 (HGAH) provides a ligand contact to substrate. The active-site Proton donor is the Tyr-180. Arg-227 is an FMN binding site.

The protein belongs to the NADH:flavin oxidoreductase/NADH oxidase family. It depends on FMN as a cofactor.

Putative oxophytodienoate reductase that may be involved in the biosynthesis or metabolism of oxylipin signaling molecules. This Arabidopsis thaliana (Mouse-ear cress) protein is Putative 12-oxophytodienoate reductase-like protein 2A.